A 415-amino-acid polypeptide reads, in one-letter code: Imidazolonepropionase (415 aa).

Positions 75 and 77 each coordinate Fe(3+). Residues H75 and H77 each contribute to the Zn(2+) site. Residues R84, Y147, and H180 each contribute to the 4-imidazolone-5-propanoate site. Residue Y147 participates in N-formimidoyl-L-glutamate binding. Residue H245 participates in Fe(3+) binding. H245 serves as a coordination point for Zn(2+). Q248 serves as a coordination point for 4-imidazolone-5-propanoate. D320 is a binding site for Fe(3+). D320 lines the Zn(2+) pocket. Positions 322 and 324 each coordinate N-formimidoyl-L-glutamate. 4-imidazolone-5-propanoate is bound at residue T325.

The protein belongs to the metallo-dependent hydrolases superfamily. HutI family. It depends on Zn(2+) as a cofactor. Fe(3+) is required as a cofactor.

The protein localises to the cytoplasm. It carries out the reaction 4-imidazolone-5-propanoate + H2O = N-formimidoyl-L-glutamate. The protein operates within amino-acid degradation; L-histidine degradation into L-glutamate; N-formimidoyl-L-glutamate from L-histidine: step 3/3. Its function is as follows. Catalyzes the hydrolytic cleavage of the carbon-nitrogen bond in imidazolone-5-propanoate to yield N-formimidoyl-L-glutamate. It is the third step in the universal histidine degradation pathway. The sequence is that of Imidazolonepropionase from Photorhabdus laumondii subsp. laumondii (strain DSM 15139 / CIP 105565 / TT01) (Photorhabdus luminescens subsp. laumondii).